A 320-amino-acid chain; its full sequence is Glucokinase (320 aa).

The protein belongs to the ROK (NagC/XylR) family. Monomer. It depends on a divalent metal cation as a cofactor.

It carries out the reaction D-glucose + ATP = D-glucose 6-phosphate + ADP + H(+). Catalyzes the phosphorylation of D-glucose to D-glucose 6-phosphate using ATP as the phosphate donor. ITP can also serve as an effective phosphoryl donor. According to Hansen et al., the enzyme has a broad hexose specificity, and in addition to glucose, which shows the highest catalytic efficiency, it can also phosphorylate fructose, mannose, glucosamine, N-acetylglucosamine, N-acetylmannosamine and 2-deoxyglucose. However, according to Sakuraba et al., the enzyme shows strict specificity for D-glucose. This is Glucokinase from Aeropyrum pernix (strain ATCC 700893 / DSM 11879 / JCM 9820 / NBRC 100138 / K1).